Consider the following 301-residue polypeptide: Bifunctional protein FolD (301 aa).

NADP(+)-binding positions include 164 to 166 (GRS), Ser191, and Ile232.

It belongs to the tetrahydrofolate dehydrogenase/cyclohydrolase family. In terms of assembly, homodimer.

The catalysed reaction is (6R)-5,10-methylene-5,6,7,8-tetrahydrofolate + NADP(+) = (6R)-5,10-methenyltetrahydrofolate + NADPH. The enzyme catalyses (6R)-5,10-methenyltetrahydrofolate + H2O = (6R)-10-formyltetrahydrofolate + H(+). Its pathway is one-carbon metabolism; tetrahydrofolate interconversion. Functionally, catalyzes the oxidation of 5,10-methylenetetrahydrofolate to 5,10-methenyltetrahydrofolate and then the hydrolysis of 5,10-methenyltetrahydrofolate to 10-formyltetrahydrofolate. The sequence is that of Bifunctional protein FolD from Borreliella afzelii (strain PKo) (Borrelia afzelii).